Consider the following 419-residue polypeptide: 3-isopropylmalate dehydratase large subunit (419 aa).

3 residues coordinate [4Fe-4S] cluster: Cys-300, Cys-360, and Cys-363.

It belongs to the aconitase/IPM isomerase family. LeuC type 2 subfamily. As to quaternary structure, heterodimer of LeuC and LeuD. Requires [4Fe-4S] cluster as cofactor.

It catalyses the reaction (2R,3S)-3-isopropylmalate = (2S)-2-isopropylmalate. It participates in amino-acid biosynthesis; L-leucine biosynthesis; L-leucine from 3-methyl-2-oxobutanoate: step 2/4. Its function is as follows. Catalyzes the isomerization between 2-isopropylmalate and 3-isopropylmalate, via the formation of 2-isopropylmaleate. The polypeptide is 3-isopropylmalate dehydratase large subunit (Clostridium botulinum (strain Eklund 17B / Type B)).